Here is a 253-residue protein sequence, read N- to C-terminus: Sulfate transporter CysZ (253 aa).

Transmembrane regions (helical) follow at residues 31 to 51 (FVIL…WWLF), 75 to 95 (LLWP…FSTI), 151 to 171 (IVLL…PVLW), and 222 to 242 (IPVL…AMWV).

This sequence belongs to the CysZ family.

The protein resides in the cell inner membrane. In terms of biological role, high affinity, high specificity proton-dependent sulfate transporter, which mediates sulfate uptake. Provides the sulfur source for the cysteine synthesis pathway. The protein is Sulfate transporter CysZ of Citrobacter koseri (strain ATCC BAA-895 / CDC 4225-83 / SGSC4696).